Consider the following 410-residue polypeptide: F-box protein At3g61340 (410 aa).

Residues E17 to I66 form the F-box domain.

In Arabidopsis thaliana (Mouse-ear cress), this protein is F-box protein At3g61340.